Consider the following 110-residue polypeptide: uncharacterized protein (110 aa).

Residues 38–62 form a disordered region; that stretch reads SVQQNARAEEAEAAAPPAEEDSLPD.

This is an uncharacterized protein from Mus musculus (Mouse).